Reading from the N-terminus, the 348-residue chain is Probable dual-specificity RNA methyltransferase RlmN (348 aa).

Catalysis depends on E93, which acts as the Proton acceptor. In terms of domain architecture, Radical SAM core spans 99–333 (TEKRLTACLS…VSLRKSRGLD (235 aa)). C106 and C338 are oxidised to a cystine. Residues C113, C117, and C120 each contribute to the [4Fe-4S] cluster site. S-adenosyl-L-methionine-binding positions include 160–161 (GE), S190, 219–221 (SLH), and N295. The S-methylcysteine intermediate role is filled by C338.

This sequence belongs to the radical SAM superfamily. RlmN family. The cofactor is [4Fe-4S] cluster.

Its subcellular location is the cytoplasm. The enzyme catalyses adenosine(2503) in 23S rRNA + 2 reduced [2Fe-2S]-[ferredoxin] + 2 S-adenosyl-L-methionine = 2-methyladenosine(2503) in 23S rRNA + 5'-deoxyadenosine + L-methionine + 2 oxidized [2Fe-2S]-[ferredoxin] + S-adenosyl-L-homocysteine. It carries out the reaction adenosine(37) in tRNA + 2 reduced [2Fe-2S]-[ferredoxin] + 2 S-adenosyl-L-methionine = 2-methyladenosine(37) in tRNA + 5'-deoxyadenosine + L-methionine + 2 oxidized [2Fe-2S]-[ferredoxin] + S-adenosyl-L-homocysteine. Its function is as follows. Specifically methylates position 2 of adenine 2503 in 23S rRNA and position 2 of adenine 37 in tRNAs. This is Probable dual-specificity RNA methyltransferase RlmN from Prochlorococcus marinus (strain AS9601).